We begin with the raw amino-acid sequence, 751 residues long: Serine/threonine-protein kinase B-raf (751 aa).

Residues Met-1 to Glu-32 show a composition bias toward gly residues. Positions Met-1–Ala-55 are disordered. Position 2 is an N-acetylalanine (Ala-2). Residues Ala-46–Ala-55 show a composition bias toward low complexity. Ser-135 is subject to Phosphoserine. An RBD domain is found at Pro-139–Leu-211. His-219, Cys-232, Cys-235, Cys-245, Cys-248, His-253, Cys-256, and Cys-264 together coordinate Zn(2+). Residues Glu-288 to Gly-440 are disordered. The segment covering Pro-297–Pro-324 has biased composition (low complexity). Ser-316 is modified (phosphoserine). Positions Pro-331–Ser-346 are enriched in basic and acidic residues. A Phosphoserine modification is found at Ser-348. Position 356 is a phosphothreonine; by autocatalysis (Thr-356). At Thr-379 the chain carries Phosphothreonine. A Phosphoserine modification is found at Ser-382. Phosphothreonine is present on Thr-384. The segment covering Gln-406 to Ser-432 has biased composition (basic and acidic residues). Phosphoserine occurs at positions 431 and 432. Residues Ile-442–Leu-702 form the Protein kinase domain. ATP-binding positions include Ile-448–Val-456 and Lys-468. The active-site Proton acceptor is the Asp-561. Residue Lys-563 forms a Glycyl lysine isopeptide (Lys-Gly) (interchain with G-Cter in ubiquitin) linkage. At Arg-656 the chain carries Omega-N-methylarginine; by PRMT5. A phosphoserine mark is found at Ser-714 and Ser-735. At Thr-738 the chain carries Phosphothreonine; by MAPK1.

This sequence belongs to the protein kinase superfamily. TKL Ser/Thr protein kinase family. RAF subfamily. In terms of assembly, monomer. Homodimer. Heterodimerizes with RAF1, and the heterodimer possesses a highly increased kinase activity compared to the respective homodimers or monomers. Heterodimerization is mitogen-regulated and enhanced by 14-3-3 proteins. MAPK1/ERK2 activation can induce a negative feedback that promotes the dissociation of the heterodimer by phosphorylating BRAF at Thr-738. Heterodimerizes (via N-terminus) with KSR1 (via N-terminus) or KSR2 (via N-terminus) in a MAP2K1-dependent manner. Interacts with MAP2K1 and MAP2K2. Found in a complex with at least BRAF, HRAS, MAP2K1, MAPK3 and RGS14. Interacts with RIT1. Interacts (via N-terminus) with RGS14 (via RBD domains); the interaction mediates the formation of a ternary complex with RAF1, a ternary complex inhibited by GNAI1. Interacts with DGKH. Interacts with PRMT5. Interacts with AKAP13, MAP2K1 and KSR1. Identified in a complex with AKAP13, KSR1 and MAP2K1. Interacts with FNIP1 and FNIP2. The cofactor is Zn(2+). Phosphorylation at Ser-348 by SGK1 inhibits its activity. Dephosphorylation of Ser-348 by the SHOC2-MRAS-PP1c (SMP) complex consisting of SHOC2, GTP-bound M-Ras/MRAS and the catalytic subunit of protein phosphatase 1 (PPP1CA, PPP1CB or PPP1CC); this relieves inactivation and stimulates kinase activity. Post-translationally, methylation by PRMT5 decreases stability and kinase activity. In terms of processing, ubiquitinated by RNF149; which leads to proteasomal degradation. Polyubiquitinated at Lys-615 in response to EGF.

Its subcellular location is the nucleus. It is found in the cytoplasm. The protein localises to the cell membrane. It catalyses the reaction L-seryl-[protein] + ATP = O-phospho-L-seryl-[protein] + ADP + H(+). The enzyme catalyses L-threonyl-[protein] + ATP = O-phospho-L-threonyl-[protein] + ADP + H(+). With respect to regulation, in quiescent cells, maintained in an inactive state via an intramolecular interaction between the protein kinase and N-terminal domains. Following mitogen-mediated cell activation, binds via its RGB domain to active HRAS (GTP-bound) which releases the inhibitory intramolecular interaction between the two domains. This allows the MAP2K1-mediated dimerization of KSR1 or KSR2, and BRAF which activates BRAF. Functionally, involved in the transduction of mitogenic signals from the cell membrane to the nucleus. Phosphorylates MAP2K1, and thereby activates the MAP kinase signal transduction pathway. Phosphorylates PFKFB2. May play a role in the postsynaptic responses of hippocampal neurons. This chain is Serine/threonine-protein kinase B-raf, found in Mus musculus (Mouse).